The following is a 466-amino-acid chain: MSTGKVVQVIGPVVDVAFESGQQVPDINNALKIDKGDGQTLTVEVSLALGDGIVRTIAMDSTDGLQRGMSVTDTGDAIKVPVGEATLGRVFNVLGEPVDNNGEIAAETPRHSIHRDAPSYDDLANSTEILETGIKVIDLLAPYVRGGKIGLFGGAGVGKTVLIQELIHNIAQGHNGISVFTGVGERTREGNDMYHEMAESGVLKQTAMVYGQMNEPPGARMRVALTGLTMAENFRDSEGKDVLLFIDNIFRFTQAGSEVSALLGRIPSAVGYQPTLATEMGQLQERITSTKKGSVTSIQAVYVPADDYTDPAPATTFAHLDATTNLERALTQQGIYPAVDPLASTSSALDPQVVGQEHYEVATEVQRTLQRYRELQDIISILGMDELSDEEKTTVNRARRIQFFLSQPFSVAETFTGINGEYVPVAETVRSFKEILDGKYDDLPEDAFRNVGAIEQVVEKAKTMAQ.

153–160 (GGAGVGKT) provides a ligand contact to ATP.

The protein belongs to the ATPase alpha/beta chains family. As to quaternary structure, F-type ATPases have 2 components, CF(1) - the catalytic core - and CF(0) - the membrane proton channel. CF(1) has five subunits: alpha(3), beta(3), gamma(1), delta(1), epsilon(1). CF(0) has three main subunits: a(1), b(2) and c(9-12). The alpha and beta chains form an alternating ring which encloses part of the gamma chain. CF(1) is attached to CF(0) by a central stalk formed by the gamma and epsilon chains, while a peripheral stalk is formed by the delta and b chains.

The protein resides in the cell membrane. It catalyses the reaction ATP + H2O + 4 H(+)(in) = ADP + phosphate + 5 H(+)(out). In terms of biological role, produces ATP from ADP in the presence of a proton gradient across the membrane. The catalytic sites are hosted primarily by the beta subunits. This chain is ATP synthase subunit beta, found in Leuconostoc citreum (strain KM20).